We begin with the raw amino-acid sequence, 152 residues long: Snaclec coagulation factor IX/factor X-binding protein subunit A (152 aa).

A signal peptide spans 1–23 (MGRFIFMSFGLLVVAASLRGTGA). Residues 24-152 (DCLSGWSSYE…GQQNPFVCEA (129 aa)) enclose the C-type lectin domain. Cystine bridges form between Cys25-Cys36, Cys53-Cys150, and Cys125-Cys142. 3 residues coordinate Ca(2+): Ser64, Glu66, and Glu70. Glu151 provides a ligand contact to Ca(2+).

This sequence belongs to the snaclec family. Heterodimer of subunits A and B; disulfide-linked. As to expression, expressed by the venom gland.

The protein localises to the secreted. Functionally, anticoagulant protein which binds to the gamma-carboxyglutamic acid-domain regions of factors IX (F9) and factor X (F10) in the presence of calcium with a 1 to 1 stoichiometry. This is Snaclec coagulation factor IX/factor X-binding protein subunit A from Protobothrops flavoviridis (Habu).